A 99-amino-acid chain; its full sequence is Cytochrome c2 iso-1 (99 aa).

Residues cysteine 10, cysteine 13, histidine 14, and methionine 75 each coordinate heme c.

It belongs to the cytochrome c family. In terms of processing, binds 1 heme c group covalently per subunit.

Cytochrome c2 is found mainly in purple, non-sulfur, photosynthetic bacteria where it functions as the electron donor to the oxidized bacteriochlorophyll in the photophosphorylation pathway. However, it may also have a role in the respiratory chain and is found in some non-photosynthetic bacteria. The polypeptide is Cytochrome c2 iso-1 (Magnetospirillum fulvum (Rhodospirillum fulvum)).